A 156-amino-acid polypeptide reads, in one-letter code: Arginine repressor (156 aa).

It belongs to the ArgR family.

It is found in the cytoplasm. The protein operates within amino-acid biosynthesis; L-arginine biosynthesis [regulation]. Its function is as follows. Regulates arginine biosynthesis genes. The sequence is that of Arginine repressor from Shewanella baltica (strain OS223).